A 294-amino-acid chain; its full sequence is Protein PET54 (294 aa).

Its subcellular location is the mitochondrion inner membrane. Its function is as follows. Activator of specific mitochondrial mRNAs. PET54 is involved in the excision of intron aI5-beta from pre-mRNA for cytochrome c oxidase I (COX1) and plays a role in promoting the translation of COX3. The protein is Protein PET54 (PET54) of Saccharomyces bayanus (Yeast).